The following is a 332-amino-acid chain: 3-ketodihydrosphingosine reductase (332 aa).

The N-terminal stretch at 1–25 (MLLLAAAGLVAFVLLLYMVSPLISP) is a signal peptide. Over 26-270 (KPLALPGAHV…GNFNSSIGSD (245 aa)) the chain is Cytoplasmic. NADPH contacts are provided by Gly-39, Ser-41, Ser-42, Gly-43, Arg-64, Lys-68, and Asp-93. The short motif at 39-43 (GGSSG) is the GXSXG element. The active-site Proton donor is Ser-172. Catalysis depends on Tyr-186, which acts as the Proton acceptor. 2 residues coordinate NADP(+): Tyr-186 and Lys-190. Lys-190 acts as the Lowers pKa of active site Tyr in catalysis. The helical transmembrane segment at 271-291 (GYMLSSLTCGMAPVTSITEGL) threads the bilayer. The Lumenal segment spans residues 292–293 (QQ). A helical transmembrane segment spans residues 294–314 (VVTMGLFRTIALFYLGSFDNI). Residues 315 to 332 (VRRCMVQKAKPEVVDKTA) lie on the Cytoplasmic side of the membrane.

Belongs to the short-chain dehydrogenases/reductases (SDR) family.

It localises to the endoplasmic reticulum membrane. It carries out the reaction sphinganine + NADP(+) = 3-oxosphinganine + NADPH + H(+). It functions in the pathway lipid metabolism; sphingolipid metabolism. In terms of biological role, catalyzes the reduction of 3'-oxosphinganine (3-ketodihydrosphingosine/KDS) to sphinganine (dihydrosphingosine/DHS), the second step of de novo sphingolipid biosynthesis. The chain is 3-ketodihydrosphingosine reductase (Kdsr) from Mus musculus (Mouse).